We begin with the raw amino-acid sequence, 210 residues long: Ras-related protein SEC4 (210 aa).

A GTP-binding site is contributed by Gly21–Ser28. The Effector region signature appears at Phe43–Phe51. GTP is bound by residues Asp69–Gln73 and Asn127–Asp130. 2 S-geranylgeranyl cysteine lipidation sites follow: Cys209 and Cys210.

Belongs to the small GTPase superfamily. Rab family.

It localises to the cytoplasmic vesicle. Its subcellular location is the secretory vesicle membrane. It is found in the cell membrane. Involved in exocytosis. Maybe by regulating the binding and fusion of secretory vesicles with the cell surface. The GTP-bound form of SEC4 may interact with an effector, thereby stimulating its activity and leading to exocytotic fusion. SEC4 may be an upstream activator of the 19.5S SEC8/SEC15 particle. SEC4 probably interacts directly with SEC8; it could serve as the attachment site for the SEC8/SEC15 particle. This chain is Ras-related protein SEC4 (SEC4), found in Candida albicans (strain SC5314 / ATCC MYA-2876) (Yeast).